We begin with the raw amino-acid sequence, 127 residues long: Small ribosomal subunit protein uS13 (127 aa).

The tract at residues R93 to K127 is disordered.

The protein belongs to the universal ribosomal protein uS13 family. Part of the 30S ribosomal subunit. Forms a loose heterodimer with protein S19. Forms two bridges to the 50S subunit in the 70S ribosome.

Its function is as follows. Located at the top of the head of the 30S subunit, it contacts several helices of the 16S rRNA. In the 70S ribosome it contacts the 23S rRNA (bridge B1a) and protein L5 of the 50S subunit (bridge B1b), connecting the 2 subunits; these bridges are implicated in subunit movement. Contacts the tRNAs in the A and P-sites. The sequence is that of Small ribosomal subunit protein uS13 from Koribacter versatilis (strain Ellin345).